We begin with the raw amino-acid sequence, 69 residues long: MSFASTLYKTVFKRNSVFVGTVFASAFVFQAAFDTGVTSWYENHNKGKLWKDIKGGIMNGGEEDEEDDE.

Topologically, residues 1 to 18 are mitochondrial matrix; that stretch reads MSFASTLYKTVFKRNSVF. The helical transmembrane segment at 19–44 threads the bilayer; that stretch reads VGTVFASAFVFQAAFDTGVTSWYENH. The Mitochondrial intermembrane segment spans residues 45–69; that stretch reads NKGKLWKDIKGGIMNGGEEDEEDDE.

This sequence belongs to the UQCR10/QCR9 family. Component of the ubiquinol-cytochrome c oxidoreductase (cytochrome b-c1 complex, complex III, CIII), a multisubunit enzyme composed of 3 respiratory subunits cytochrome b, cytochrome c1 and Rieske protein, 2 core protein subunits, and additional low-molecular weight protein subunits. The complex exists as an obligatory dimer and forms supercomplexes (SCs) in the inner mitochondrial membrane with cytochrome c oxidase (complex IV, CIV).

It is found in the mitochondrion inner membrane. Functionally, component of the ubiquinol-cytochrome c oxidoreductase, a multisubunit transmembrane complex that is part of the mitochondrial electron transport chain which drives oxidative phosphorylation. The respiratory chain contains 3 multisubunit complexes succinate dehydrogenase (complex II, CII), ubiquinol-cytochrome c oxidoreductase (cytochrome b-c1 complex, complex III, CIII) and cytochrome c oxidase (complex IV, CIV), that cooperate to transfer electrons derived from NADH and succinate to molecular oxygen, creating an electrochemical gradient over the inner membrane that drives transmembrane transport and the ATP synthase. The cytochrome b-c1 complex catalyzes electron transfer from ubiquinol to cytochrome c, linking this redox reaction to translocation of protons across the mitochondrial inner membrane, with protons being carried across the membrane as hydrogens on the quinol. In the process called Q cycle, 2 protons are consumed from the matrix, 4 protons are released into the intermembrane space and 2 electrons are passed to cytochrome c. This is Cytochrome b-c1 complex subunit 9 (QCR9) from Kluyveromyces lactis (strain ATCC 8585 / CBS 2359 / DSM 70799 / NBRC 1267 / NRRL Y-1140 / WM37) (Yeast).